Consider the following 115-residue polypeptide: Holo-[acyl-carrier-protein] synthase (115 aa).

Positions 6 and 51 each coordinate Mg(2+).

Belongs to the P-Pant transferase superfamily. AcpS family. Requires Mg(2+) as cofactor.

Its subcellular location is the cytoplasm. The catalysed reaction is apo-[ACP] + CoA = holo-[ACP] + adenosine 3',5'-bisphosphate + H(+). Transfers the 4'-phosphopantetheine moiety from coenzyme A to a Ser of acyl-carrier-protein. This is Holo-[acyl-carrier-protein] synthase from Campylobacter jejuni subsp. jejuni serotype O:23/36 (strain 81-176).